A 220-amino-acid chain; its full sequence is U1 small nuclear ribonucleoprotein C (220 aa).

The Matrin-type zinc-finger motif lies at 4–36 (FFCDYCDVYLTHDSISVRKAHNSGRNHLRNVVD). The disordered stretch occupies residues 197-220 (PLGGFPAGAPLPGAPPGYGPPGAK). Positions 208-220 (PGAPPGYGPPGAK) are enriched in pro residues.

It belongs to the U1 small nuclear ribonucleoprotein C family. As to quaternary structure, U1 snRNP is composed of the 7 core Sm proteins B/B', D1, D2, D3, E, F and G that assemble in a heptameric protein ring on the Sm site of the small nuclear RNA to form the core snRNP, and at least 3 U1 snRNP-specific proteins U1-70K, U1-A and U1-C. U1-C interacts with U1 snRNA and the 5' splice-site region of the pre-mRNA.

The protein localises to the nucleus. Its function is as follows. Component of the spliceosomal U1 snRNP, which is essential for recognition of the pre-mRNA 5' splice-site and the subsequent assembly of the spliceosome. U1-C is directly involved in initial 5' splice-site recognition for both constitutive and regulated alternative splicing. The interaction with the 5' splice-site seems to precede base-pairing between the pre-mRNA and the U1 snRNA. Stimulates commitment or early (E) complex formation by stabilizing the base pairing of the 5' end of the U1 snRNA and the 5' splice-site region. In Tuber melanosporum (strain Mel28) (Perigord black truffle), this protein is U1 small nuclear ribonucleoprotein C.